The following is a 278-amino-acid chain: HTH-type transcriptional activator RhaS (278 aa).

The region spanning asparagine 174–glycine 272 is the HTH araC/xylS-type domain. DNA-binding regions (H-T-H motif) lie at residues aspartate 191 to threonine 212 and valine 239 to phenylalanine 262.

Binds DNA as a dimer.

It localises to the cytoplasm. Functionally, activates expression of the rhaBAD and rhaT operons. The protein is HTH-type transcriptional activator RhaS of Escherichia coli O127:H6 (strain E2348/69 / EPEC).